We begin with the raw amino-acid sequence, 243 residues long: Probable transcriptional regulatory protein Tbd_2215 (243 aa).

Belongs to the TACO1 family.

It is found in the cytoplasm. In Thiobacillus denitrificans (strain ATCC 25259 / T1), this protein is Probable transcriptional regulatory protein Tbd_2215.